A 1059-amino-acid polypeptide reads, in one-letter code: Dihydropyrimidine dehydrogenase [NADP(+)] (1059 aa).

A 4Fe-4S ferredoxin-type 1 domain is found at 84–118 (ERGALKEAMRCLKCADAPCQKSCPTQLDVKSFITS). Residues C94, C97, C102, C106, C145, C151, C155, and Q171 each contribute to the [4Fe-4S] cluster site. Residues 207-211 (GCGPA), 231-239 (EKRAYIGGL), R248, and L274 each bind FAD. NADP(+)-binding positions include 354-357 (AGDT), 378-379 (RK), R385, 451-453 (AFG), and 495-501 (DVAGVAE). 494–503 (GDVAGVAETT) contacts FAD. Residues S564 and 588 to 589 (KT) contribute to the FMN site. Substrate is bound by residues N623 and 682 to 684 (NLS). The active-site Proton acceptor is the C685. K723 contacts FMN. Position 750-751 (750-751 (NT)) interacts with substrate. Residues G781, 807-809 (TGG), and 830-831 (CS) each bind FMN. 4Fe-4S ferredoxin-type domains follow at residues 955–987 (KVAI…FDPV) and 989–1019 (HQPH…MVPR). 8 residues coordinate [4Fe-4S] cluster: C964, C967, C970, C974, C998, C1001, C1004, and C1008.

It belongs to the dihydropyrimidine dehydrogenase family. [4Fe-4S] cluster is required as a cofactor. The cofactor is FAD. FMN serves as cofactor.

It carries out the reaction 5,6-dihydrouracil + NADP(+) = uracil + NADPH + H(+). It participates in amino-acid biosynthesis; beta-alanine biosynthesis. Involved in pyrimidine base degradation. Catalyzes the reduction of uracil and thymine. Involved in the degradation of the chemotherapeutic drug 5-fluorouracil. In Caenorhabditis elegans, this protein is Dihydropyrimidine dehydrogenase [NADP(+)] (dpyd-1).